A 52-amino-acid chain; its full sequence is MKKYVCTVCGYEYDPAEGDPDNGVKPGTSFDDLPADWVCPVCGAPKSEFEAA.

Positions 1 to 52 (MKKYVCTVCGYEYDPAEGDPDNGVKPGTSFDDLPADWVCPVCGAPKSEFEAA) constitute a Rubredoxin-like domain. Residues C6, C9, C39, and C42 each coordinate Fe cation.

This sequence belongs to the rubredoxin family. The cofactor is Fe(3+).

The protein localises to the cytoplasm. Its function is as follows. Rubredoxin is a small nonheme, iron protein lacking acid-labile sulfide. Its single Fe, chelated to 4 Cys, functions as an electron acceptor and may also stabilize the conformation of the molecule. In terms of biological role, electron acceptor for cytoplasmic lactate dehydrogenase. The chain is Rubredoxin (rub) from Nitratidesulfovibrio vulgaris (strain ATCC 29579 / DSM 644 / CCUG 34227 / NCIMB 8303 / VKM B-1760 / Hildenborough) (Desulfovibrio vulgaris).